Consider the following 527-residue polypeptide: Transcription initiation factor TFIID subunit 6b (527 aa).

A Histone-fold domain is found at 3–99 (TKESIEVIAQ…NLEPTSGSKS (97 aa)). 2 disordered regions span residues 410–442 (SPPT…THQP) and 462–492 (MRGT…PKTS). Polar residues-rich tracts occupy residues 416–427 (VWKTNGKLTSPR) and 462–473 (MRGTTTVPQQSH).

This sequence belongs to the TAF6 family. In terms of assembly, component of the TFIID complex. TFIID is composed of TATA binding protein (TBP) and a number of TBP-associated factors (TAFs) whose MWs range from 14-217 kDa. Interacts with TAF5 and TAF9. In terms of tissue distribution, expressed in roots, leaves, inflorescences and siliques.

Its subcellular location is the nucleus. TAFs are components of the transcription factor IID (TFIID) complex that is essential for mediating regulation of RNA polymerase transcription. Not redundant with TAF6. This Arabidopsis thaliana (Mouse-ear cress) protein is Transcription initiation factor TFIID subunit 6b (TAF6B).